A 146-amino-acid chain; its full sequence is Anti-sigma F factor (146 aa).

This sequence belongs to the anti-sigma-factor family.

It carries out the reaction L-seryl-[protein] + ATP = O-phospho-L-seryl-[protein] + ADP + H(+). The catalysed reaction is L-threonyl-[protein] + ATP = O-phospho-L-threonyl-[protein] + ADP + H(+). In terms of biological role, binds to sigma F and blocks its ability to form an RNA polymerase holoenzyme (E-sigma F). Phosphorylates SpoIIAA on a serine residue. This phosphorylation may enable SpoIIAA to act as an anti-anti-sigma factor that counteracts SpoIIAB and thus releases sigma F from inhibition. The chain is Anti-sigma F factor (spoIIAB) from Bacillus subtilis (strain 168).